Reading from the N-terminus, the 408-residue chain is Acetate kinase (408 aa).

Asn-10 serves as a coordination point for Mg(2+). Lys-17 provides a ligand contact to ATP. A substrate-binding site is contributed by Arg-96. Asp-153 (proton donor/acceptor) is an active-site residue. ATP is bound by residues 213–217 (HLGNG) and 288–290 (DLR). Glu-393 lines the Mg(2+) pocket.

This sequence belongs to the acetokinase family. In terms of assembly, homodimer. Mg(2+) serves as cofactor. It depends on Mn(2+) as a cofactor.

It localises to the cytoplasm. The catalysed reaction is acetate + ATP = acetyl phosphate + ADP. It participates in metabolic intermediate biosynthesis; acetyl-CoA biosynthesis; acetyl-CoA from acetate: step 1/2. Functionally, catalyzes the formation of acetyl phosphate from acetate and ATP. Can also catalyze the reverse reaction. The chain is Acetate kinase from Borrelia duttonii (strain Ly).